The primary structure comprises 221 residues: Epididymal secretory glutathione peroxidase (221 aa).

Residues 1-21 (MTTQLRVVHLLPLLLACFVQT) form the signal peptide. The active site involves Cys-73.

This sequence belongs to the glutathione peroxidase family. As to expression, epididymis.

Its subcellular location is the secreted. It catalyses the reaction 2 glutathione + H2O2 = glutathione disulfide + 2 H2O. Protects cells and enzymes from oxidative damage, by catalyzing the reduction of hydrogen peroxide, lipid peroxides and organic hydroperoxide, by glutathione. May constitute a glutathione peroxidase-like protective system against peroxide damage in sperm membrane lipids. The chain is Epididymal secretory glutathione peroxidase (GPX5) from Macaca fascicularis (Crab-eating macaque).